A 91-amino-acid chain; its full sequence is Protein transport protein Sec61 subunit beta (91 aa).

Residues 1–45 (MSTSAQVPGGPAAQMKRRNNAQRQEAKASQRPTSTRSVGAGGSSS) are disordered. The Cytoplasmic segment spans residues 1-62 (MSTSAQVPGG…DESQGLKVDP (62 aa)). Over residues 30–45 (QRPTSTRSVGAGGSSS) the composition is skewed to polar residues. The chain crosses the membrane as a helical span at residues 63-83 (VVVMVLSLGFIFSVVALHILA).

It belongs to the SEC61-beta family. Heterotrimeric complex composed of SEC61, SEB1 and SSS1.

The protein localises to the endoplasmic reticulum membrane. In terms of biological role, necessary for protein translocation in the endoplasmic reticulum. This is Protein transport protein Sec61 subunit beta (SBH1) from Yarrowia lipolytica (strain CLIB 122 / E 150) (Yeast).